Reading from the N-terminus, the 185-residue chain is Ubiquitin-fold modifier-conjugating enzyme 1 (185 aa).

C119 (glycyl thioester intermediate) is an active-site residue.

The protein belongs to the ubiquitin-conjugating enzyme family. UFC1 subfamily.

Its function is as follows. E2-like enzyme which forms an intermediate with UFM1 via a thioester linkage. This is Ubiquitin-fold modifier-conjugating enzyme 1 from Oryza sativa subsp. japonica (Rice).